The sequence spans 305 residues: Aquaporin-1 (305 aa).

A disordered region spans residues 1 to 34 (MSSNDSNDTDKQHTRLDPTGVDDAYIPPEQPETK). The Cytoplasmic portion of the chain corresponds to 1–48 (MSSNDSNDTDKQHTRLDPTGVDDAYIPPEQPETKHHRFKISRDTLRDH). A helical membrane pass occupies residues 49-69 (FIAAVGEFCGTFMFLWCAYVI). Residues 70–91 (CNVANHDVALVAAPDGSHPGQL) are Extracellular-facing. The helical transmembrane segment at 92 to 112 (IMIAIGFGFSVMFSIWCFAGV) threads the bilayer. Topologically, residues 113–136 (SGGALNPAMSLSLCLARAVSPTRC) are cytoplasmic. Residues 118 to 120 (NPA) carry the NPA 1 motif. A helical transmembrane segment spans residues 137-157 (VVMWVSQIVAGMAAGGAASAM). Over 158-176 (TPGEVLFANSLGLGCSRTR) the chain is Extracellular. Residues 177–197 (GLFLEMFGTAILCLTVLMTAV) form a helical membrane-spanning segment. Topologically, residues 198 to 203 (EKRETN) are cytoplasmic. A helical transmembrane segment spans residues 204–224 (FMAALPIGISLFIAHVALTAY). Residues 225–248 (TGTGVNPARSLGAAVAARYFPHYH) are Extracellular-facing. The short motif at 230-232 (NPA) is the NPA 2 element. Residues 249–269 (WIYWIGTLLGSILAWSVWQLL) traverse the membrane as a helical segment. Over 270–305 (QILDYTTYVTAEKAASTKEKAQKKGETSSSSAVAEV) the chain is Cytoplasmic. Basic and acidic residues predominate over residues 286–295 (TKEKAQKKGE). The interval 286–305 (TKEKAQKKGETSSSSAVAEV) is disordered. Residues 296–305 (TSSSSAVAEV) are compositionally biased toward polar residues.

It belongs to the MIP/aquaporin (TC 1.A.8) family.

The protein localises to the endoplasmic reticulum membrane. It localises to the cell membrane. In terms of biological role, water channel required to facilitate the transport of water across membranes. Involved in sporulation, freeze tolerance and osmotolerance. Is non-functional in most laboratory strains. This Saccharomyces cerevisiae (strain ATCC 204508 / S288c) (Baker's yeast) protein is Aquaporin-1 (AQY1).